The primary structure comprises 427 residues: Enolase (427 aa).

Residue glutamine 163 participates in (2R)-2-phosphoglycerate binding. Glutamate 205 acts as the Proton donor in catalysis. Mg(2+)-binding residues include aspartate 242, glutamate 285, and aspartate 312. Lysine 337, arginine 366, serine 367, and lysine 388 together coordinate (2R)-2-phosphoglycerate. The active-site Proton acceptor is the lysine 337.

The protein belongs to the enolase family. Mg(2+) is required as a cofactor.

Its subcellular location is the cytoplasm. It localises to the secreted. It is found in the cell surface. It catalyses the reaction (2R)-2-phosphoglycerate = phosphoenolpyruvate + H2O. The protein operates within carbohydrate degradation; glycolysis; pyruvate from D-glyceraldehyde 3-phosphate: step 4/5. Its function is as follows. Catalyzes the reversible conversion of 2-phosphoglycerate (2-PG) into phosphoenolpyruvate (PEP). It is essential for the degradation of carbohydrates via glycolysis. In Ralstonia pickettii (strain 12J), this protein is Enolase.